We begin with the raw amino-acid sequence, 569 residues long: Proline--tRNA ligase (569 aa).

The protein belongs to the class-II aminoacyl-tRNA synthetase family. ProS type 1 subfamily. In terms of assembly, homodimer.

It is found in the cytoplasm. The catalysed reaction is tRNA(Pro) + L-proline + ATP = L-prolyl-tRNA(Pro) + AMP + diphosphate. Catalyzes the attachment of proline to tRNA(Pro) in a two-step reaction: proline is first activated by ATP to form Pro-AMP and then transferred to the acceptor end of tRNA(Pro). As ProRS can inadvertently accommodate and process non-cognate amino acids such as alanine and cysteine, to avoid such errors it has two additional distinct editing activities against alanine. One activity is designated as 'pretransfer' editing and involves the tRNA(Pro)-independent hydrolysis of activated Ala-AMP. The other activity is designated 'posttransfer' editing and involves deacylation of mischarged Ala-tRNA(Pro). The misacylated Cys-tRNA(Pro) is not edited by ProRS. The chain is Proline--tRNA ligase from Latilactobacillus sakei subsp. sakei (strain 23K) (Lactobacillus sakei subsp. sakei).